The sequence spans 828 residues: MNLSRRDFMKANAAMAAATAAGLSIPVKNVEAAESEIKWDKAVCRFCGTGCAVLVGTKDGRVVASQGDPDAEVNRGLNCIKGYFLPKIMYGKDRLTQPMLRMKDGKYDKNGDFTPVSWDVAFKTMAEKFKAAVKELGPNGVGMFSSGQTTIFEGYAKSKLWKAGFRSNNIDPNARHCMASAAVAFMRTFGMDEPMGCYNDIEQAEAFVLWGSNMAEMHPILWSRITDRRLSNQDVKVAVLSTFEHRSFELADYSLIFKPHTDLVILNYIINYLIQNDAINRDFVNKHTKFKRGETDIGYGLRPENPLEQKAKNVKTAGKMYDSNFDELKALVAEYTLDKAHEMSGVPKDVLENLAKLYADPKKKVVSYWTMGFNQHTRGVWANHLIYNIHLLTGKISIPGCGPFSLTGQPSACGTAREVGTFIHRLPADLVVTNPKHREKAEQIWKLPAGVITDVLGFHAVAQSRALKDGKMRVLWQMCTNNMQGGPNINRETFPGWRNPDNFIVVSDPYPTVSCLAADLMLPTAMWVEKEGAYGNAERRTQFWRQQVKAPGEAKSDVWQLVEFSKYFTTDEMWPAEILDKNPEYKGKTLYDVLYRNGQVDKFPLSELAEGQLNDESYHFGFYLQKGLFEEYASFGRGHGHDLASFDTYHKARGLRWPVVDGKETLWRYREGYDPYVKEGEGVAFYGYPDKKAIILAVPYEPPAESPDEEYDLWLCTGRVLEHWHTGTMTRRVPELHRSFPNNLVWMHPTDAQKRGLRHGDKVKVASRRGEIISFLDTRGRNKVPEGLIYTTFFDAGQLANKLTLDATDPISKETDFKKCAVKVEKAA.

Positions 1–32 (MNLSRRDFMKANAAMAAATAAGLSIPVKNVEA) form a signal peptide, tat-type signal. The 4Fe-4S Mo/W bis-MGD-type domain occupies 37 to 93 (IKWDKAVCRFCGTGCAVLVGTKDGRVVASQGDPDAEVNRGLNCIKGYFLPKIMYGKD). Positions 44, 47, 51, and 79 each coordinate [4Fe-4S] cluster. Residues K81, Q148, N173, C177, 210 to 217 (WGSNMAEM), 241 to 245 (STFEH), M371, Q375, N481, 507 to 508 (SD), K530, D557, and 717 to 726 (TGRVLEHWHT) each bind Mo-bis(molybdopterin guanine dinucleotide). Residue F793 participates in substrate binding. Residues N801 and K818 each contribute to the Mo-bis(molybdopterin guanine dinucleotide) site.

This sequence belongs to the prokaryotic molybdopterin-containing oxidoreductase family. NasA/NapA/NarB subfamily. In terms of assembly, component of the periplasmic nitrate reductase NapAB complex composed of NapA and NapB. It depends on [4Fe-4S] cluster as a cofactor. Requires Mo-bis(molybdopterin guanine dinucleotide) as cofactor. Post-translationally, predicted to be exported by the Tat system. The position of the signal peptide cleavage has not been experimentally proven.

It localises to the periplasm. It carries out the reaction 2 Fe(II)-[cytochrome] + nitrate + 2 H(+) = 2 Fe(III)-[cytochrome] + nitrite + H2O. Catalytic subunit of the periplasmic nitrate reductase complex NapAB. Receives electrons from NapB and catalyzes the reduction of nitrate to nitrite. The polypeptide is Periplasmic nitrate reductase (Aggregatibacter actinomycetemcomitans (Actinobacillus actinomycetemcomitans)).